Reading from the N-terminus, the 160-residue chain is Secreted RxLR effector protein RXLR-C11 (160 aa).

A signal peptide spans 1 to 19 (MHFSLVLLVFAAIVIPICA). A RxLR-dEER motif is present at residues 58 to 75 (RLLRMNDKAVISDHEEER).

It belongs to the RxLR effector family.

The protein resides in the secreted. The protein localises to the host cell membrane. Its subcellular location is the host nucleus. Functionally, secreted effector that suppresses pattern-triggered immunity (PTI) in plant host. This Plasmopara halstedii (Downy mildew of sunflower) protein is Secreted RxLR effector protein RXLR-C11.